The chain runs to 121 residues: Griffithsin (121 aa).

Residues 1–120 (SLTHRKFGGS…LDSLDIYYEQ (120 aa)) enclose the Jacalin-type lectin domain.

In terms of biological role, mixed specificity lectin with anti-HIV activity. Binds to HIV envelope glycoproteins, including exterior membrane glycoprotein gp120, and inhibits viral entry into cells. Binding to gp120 is dependent on gp120 being glycosylated, and is inhibited by mannose, glucose and N-acetylglucosamine. This chain is Griffithsin, found in Griffithsia sp. (strain Q66D336) (Red alga).